Reading from the N-terminus, the 130-residue chain is Cystatin (130 aa).

The signal sequence occupies residues Met1–Ala19. The Secondary area of contact signature appears at Gln67–Gly71. Intrachain disulfides connect Cys85–Cys94 and Cys108–Cys128.

Belongs to the cystatin family.

It localises to the secreted. In terms of biological role, cysteine proteinase inhibitor. This chain is Cystatin, found in Oncorhynchus mykiss (Rainbow trout).